Reading from the N-terminus, the 118-residue chain is Large ribosomal subunit protein uL24 (118 aa).

It belongs to the universal ribosomal protein uL24 family. In terms of assembly, part of the 50S ribosomal subunit.

Its function is as follows. One of two assembly initiator proteins, it binds directly to the 5'-end of the 23S rRNA, where it nucleates assembly of the 50S subunit. Functionally, one of the proteins that surrounds the polypeptide exit tunnel on the outside of the subunit. The polypeptide is Large ribosomal subunit protein uL24 (Synechococcus sp. (strain CC9605)).